We begin with the raw amino-acid sequence, 388 residues long: Lipid-A-disaccharide synthase (388 aa).

The protein belongs to the LpxB family.

The enzyme catalyses a lipid X + a UDP-2-N,3-O-bis[(3R)-3-hydroxyacyl]-alpha-D-glucosamine = a lipid A disaccharide + UDP + H(+). Its pathway is bacterial outer membrane biogenesis; LPS lipid A biosynthesis. Condensation of UDP-2,3-diacylglucosamine and 2,3-diacylglucosamine-1-phosphate to form lipid A disaccharide, a precursor of lipid A, a phosphorylated glycolipid that anchors the lipopolysaccharide to the outer membrane of the cell. This Burkholderia mallei (strain ATCC 23344) protein is Lipid-A-disaccharide synthase.